The following is a 121-amino-acid chain: Type II secretion system protein I (121 aa).

A propeptide spans 1–6 (MRRQKG) (leader sequence). Met-7 carries the post-translational modification N-methylmethionine. Residues 7–27 (MTLVEVLVALSVFALAGIAVL) form a helical membrane-spanning segment.

Belongs to the GSP I family. Type II secretion is composed of four main components: the outer membrane complex, the inner membrane complex, the cytoplasmic secretion ATPase and the periplasm-spanning pseudopilus. Interacts with core component OutG. Post-translationally, cleaved by prepilin peptidase. Methylated by prepilin peptidase at the amino group of the N-terminal methionine once the leader sequence is cleaved by prepilin peptidase.

The protein resides in the cell inner membrane. In terms of biological role, component of the type II secretion system required for the energy-dependent secretion of extracellular factors such as proteases and toxins from the periplasm. Part of the pseudopilus tip complex that is critical for the recognition and binding of secretion substrates. The protein is Type II secretion system protein I (outI) of Pectobacterium carotovorum subsp. carotovorum (Erwinia carotovora subsp. carotovora).